The following is a 192-amino-acid chain: UPF0149 protein YgfB (192 aa).

Belongs to the UPF0149 family.

This is UPF0149 protein YgfB from Salmonella typhi.